Consider the following 277-residue polypeptide: Undecaprenyl-diphosphatase (277 aa).

7 consecutive transmembrane segments (helical) span residues 3-23 (IALLIKAAIMGIVEGLTEFLP), 44-64 (AKVFDIAIQTGAIFAVILVYW), 82-102 (QFALNVLVAFVPAVVLGLLFG), 109-129 (LFTPVVVASAFIVGGFIILWA), 189-209 (TDFSFYLAIPTLIGAGAYSLF), 218-238 (ADAPMFGVGLLFSFLSAWLCI), and 253-273 (FAWYRIAFGIVVLATAWSGVV).

The protein belongs to the UppP family.

The protein resides in the cell inner membrane. It carries out the reaction di-trans,octa-cis-undecaprenyl diphosphate + H2O = di-trans,octa-cis-undecaprenyl phosphate + phosphate + H(+). Functionally, catalyzes the dephosphorylation of undecaprenyl diphosphate (UPP). Confers resistance to bacitracin. This Polaromonas naphthalenivorans (strain CJ2) protein is Undecaprenyl-diphosphatase.